A 599-amino-acid polypeptide reads, in one-letter code: Cytochrome P450 monooxygenase ALT8 (599 aa).

The next 2 helical transmembrane spans lie at 4–21 and 36–56; these read LACVGAAAMACALAVYLG and ILFGCSGLWYVWKGLLWPAYF. N-linked (GlcNAc...) asparagine glycosylation is present at asparagine 127. Low complexity predominate over residues 495–504; sequence DDSSAASPSF. Residues 495–522 form a disordered region; sequence DDSSAASPSFGGSGKRKSQYTDTHKEPS. Residue cysteine 539 participates in heme binding.

Belongs to the cytochrome P450 family. Requires heme as cofactor.

It localises to the membrane. The protein operates within secondary metabolite biosynthesis. Cytochrome P450 monooxygenase; part of the gene cluster that mediates the biosynthesis of the host-selective toxins (HSTs) AAL-toxins, sphinganine-analog mycotoxins responsible for Alternaria stem canker on tomato by the tomato pathotype. The biosynthesis starts with the polyketide synthase ALT1-catalyzed C-16 carbon chain assembly from one starter acetyl-CoA unit with malonyl-CoA extender units. ALT1 also selectively transfers methyl groups at the first and the third cycle of chain elongation for AAL toxin. The C-16 polyketide chain is released from the enzyme by a nucleophilic attack of a carbanion, which is derived from R-carbon of glycin by decarboxylation, on the carbonyl carbon of polyketide acyl chain. This step is probably catalyzed by a pyridoxal 5'-phosphate-dependent aminoacyl transferase ALT4. The respective functions of the other enzymes encoded by the cluster have still to be elucidated. The sphingosine N-acyltransferase-like protein ALT7 seems not to act as a resistance/self-tolerance factor against the toxin in the toxin biosynthetic gene cluster, contrary to what is expected. This chain is Cytochrome P450 monooxygenase ALT8, found in Alternaria alternata (Alternaria rot fungus).